A 349-amino-acid polypeptide reads, in one-letter code: Isopentenyl-diphosphate delta-isomerase (349 aa).

9–10 (RK) serves as a coordination point for substrate. FMN-binding positions include 65–67 (AMT), Ser-95, and Asn-124. Residue 95–97 (STH) participates in substrate binding. Gln-154 is a substrate binding site. Residue Glu-155 participates in Mg(2+) binding. Residues Lys-186, Ser-211, Thr-216, 262–264 (GLR), and 283–284 (SR) each bind FMN.

The protein belongs to the IPP isomerase type 2 family. In terms of assembly, homooctamer. Dimer of tetramers. It depends on FMN as a cofactor. The cofactor is NADPH. Mg(2+) serves as cofactor.

The protein localises to the cytoplasm. It carries out the reaction isopentenyl diphosphate = dimethylallyl diphosphate. In terms of biological role, involved in the biosynthesis of isoprenoids. Catalyzes the 1,3-allylic rearrangement of the homoallylic substrate isopentenyl (IPP) to its allylic isomer, dimethylallyl diphosphate (DMAPP). The protein is Isopentenyl-diphosphate delta-isomerase of Staphylococcus epidermidis (strain ATCC 35984 / DSM 28319 / BCRC 17069 / CCUG 31568 / BM 3577 / RP62A).